A 198-amino-acid polypeptide reads, in one-letter code: NAD(P)H dehydrogenase (quinone) (198 aa).

In terms of domain architecture, Flavodoxin-like spans 4–189 (ILVLYYSMYG…SIARYQGEYV (186 aa)). Residues 10–15 (SMYGHI) and 78–80 (TRF) contribute to the FMN site. Residue Tyr-12 participates in NAD(+) binding. Position 98 (Trp-98) interacts with substrate. FMN-binding positions include 113–118 (STGTGG) and His-133.

It belongs to the WrbA family. FMN is required as a cofactor.

The catalysed reaction is a quinone + NADH + H(+) = a quinol + NAD(+). It carries out the reaction a quinone + NADPH + H(+) = a quinol + NADP(+). In Citrobacter koseri (strain ATCC BAA-895 / CDC 4225-83 / SGSC4696), this protein is NAD(P)H dehydrogenase (quinone).